Here is a 187-residue protein sequence, read N- to C-terminus: Peptide deformylase (187 aa).

Fe cation is bound by residues cysteine 94 and histidine 136. The active site involves glutamate 137. Position 140 (histidine 140) interacts with Fe cation.

It belongs to the polypeptide deformylase family. Fe(2+) serves as cofactor.

The enzyme catalyses N-terminal N-formyl-L-methionyl-[peptide] + H2O = N-terminal L-methionyl-[peptide] + formate. In terms of biological role, removes the formyl group from the N-terminal Met of newly synthesized proteins. Requires at least a dipeptide for an efficient rate of reaction. N-terminal L-methionine is a prerequisite for activity but the enzyme has broad specificity at other positions. This Chlorobaculum tepidum (strain ATCC 49652 / DSM 12025 / NBRC 103806 / TLS) (Chlorobium tepidum) protein is Peptide deformylase.